Reading from the N-terminus, the 331-residue chain is Glucokinase (331 aa).

16–21 (GDIGGT) serves as a coordination point for ATP.

It belongs to the bacterial glucokinase family.

It localises to the cytoplasm. The enzyme catalyses D-glucose + ATP = D-glucose 6-phosphate + ADP + H(+). The sequence is that of Glucokinase from Pseudomonas aeruginosa (strain LESB58).